Reading from the N-terminus, the 137-residue chain is Large ribosomal subunit protein uL16 (137 aa).

The protein belongs to the universal ribosomal protein uL16 family. Part of the 50S ribosomal subunit.

In terms of biological role, binds 23S rRNA and is also seen to make contacts with the A and possibly P site tRNAs. This is Large ribosomal subunit protein uL16 from Bradyrhizobium sp. (strain ORS 278).